An 877-amino-acid chain; its full sequence is MQLKDGGTGMSRRRKHADSPARRSTPHRAAAKNCRPAAEPWLRESRAACSSQLRRAGTRSARRAQRQAAADGGRSPRGKETPVQIVKMDLLSCTFSSPNDPDGQTDIFWDQNSPMTKQLGKGRKKQISSAYSDEISHIVNRIAPQDEKPVTNSMLGVWIGETAIPCTPGVAKEKSRVKASCTKLKTKNREKELMKLAQQFDKNMEELDVIQEQDGKNHDFIQMTSKMGHLDNHKDSVQKPSGDVVPEITCTPVKKQMKGDSRISLAKAQDSSQKPFDQNVEAAFNAIFDGSTQMCSGQLSQDLLDAFLNNSKTSLRKKNALLQEEIITTETLLTENLLNKTPISLSPQIDTTVILNSCVTPCPKTPAAPDTQLDELTANDFEDDWESLLGSEPFLMENAEMLEFVPSTTAQDTCQKAICTSVGENDTITSRTNMNLGGRLRDSKVTLDLPSKTRNGELRNAGEHRFSSHPGDESRKVPFTGNKVSFEKSVTSIVSKDEDYVAVSNLEKVKEDSRNKCILNKHSSNKSSSYTRYPSKQSSELGVNLPLQVPTTDPFDSVFLGKENIVCSTNQSHGSKLNSSFDDWNDPLLASEMVEACHRLEATWDAGEVDDDLFCQACDDIERLTQQENKGSEESESVSYTSTRGSRSSSTASKQASQSAPSKHWNVVSSAVPLSLANKSQMSKPVTVQKRGRCGDGPNILDATNLSVCSKNSSDNKRGPVQVNSSKFVLGGSSNLNVNLGLMSTKIATNMKLSTQQLSHNSLADTAQNDNKILKLPKFTFKKKNPQLNQNHLVGSVPVGKISEDLGKRETVNSLLEANQQQSSINYSESLKPSSPDEEERNRKYSPEEIQRKRQEALVRRKAKALHTVQSAPISLP.

Positions 1 to 82 are disordered; sequence MQLKDGGTGM…GRSPRGKETP (82 aa). Residues 56-65 are compositionally biased toward basic residues; that stretch reads AGTRSARRAQ. A Glycyl lysine isopeptide (Lys-Gly) (interchain with G-Cter in SUMO2) cross-link involves residue Lys87. Residues 107-113 carry the ATR-activation domain (AAD) motif; sequence IFWDQNS. 2 coiled-coil regions span residues 185-213 and 306-335; these read KTKNREKELMKLAQQFDKNMEELDVIQEQ and AFLNNSKTSLRKKNALLQEEIITTETLLTE. Glycyl lysine isopeptide (Lys-Gly) (interchain with G-Cter in SUMO2) cross-links involve residues Lys416 and Lys444. A disordered region spans residues 450-479; it reads PSKTRNGELRNAGEHRFSSHPGDESRKVPF. The segment covering 454–476 has biased composition (basic and acidic residues); that stretch reads RNGELRNAGEHRFSSHPGDESRK. Phosphoserine is present on Ser467. Lys510 participates in a covalent cross-link: Glycyl lysine isopeptide (Lys-Gly) (interchain with G-Cter in SUMO2). An RBM1 motif motif is present at residues 607-622; that stretch reads GEVDDDLFCQACDDIE. 2 disordered regions span residues 626–664 and 818–877; these read QQENKGSEESESVSYTSTRGSRSSSTASKQASQSAPSKH and ANQQ…ISLP. Low complexity predominate over residues 637–662; sequence SVSYTSTRGSRSSSTASKQASQSAPS. A compositionally biased stretch (polar residues) spans 818–833; it reads ANQQQSSINYSESLKP. Residues 840–859 show a composition bias toward basic and acidic residues; that stretch reads ERNRKYSPEEIQRKRQEALV. Residues 843–865 carry the RBM2 motif motif; sequence RKYSPEEIQRKRQEALVRRKAKA. Over residues 868 to 877 the composition is skewed to polar residues; the sequence is TVQSAPISLP.

Interacts (via RBM1 motif) with RPA1. Interacts (via RBM2 motif) with RPA2. Interacts (via the ATR-activation domain motif) with ATR. In terms of processing, phosphorylated by ATR.

The protein localises to the nucleus. Its function is as follows. Replication stress response protein that accumulates at DNA damage sites and promotes replication fork progression and integrity. Recruited to stalled replication forks via interaction with the RPA complex and directly stimulates ATR kinase activity independently of TOPBP1. Probably only regulates a subset of ATR targets. In Mus musculus (Mouse), this protein is Ewing's tumor-associated antigen 1 homolog.